Consider the following 462-residue polypeptide: Calcitonin gene-related peptide type 1 receptor (462 aa).

An N-terminal signal peptide occupies residues 1–22 (MEKKFFLSFLFLLPFFMILVIA). Over 23 to 140 (ESEEENPDDL…NTHEKVKTAL (118 aa)) the chain is Extracellular. 3 cysteine pairs are disulfide-bonded: C49-C75, C66-C106, and C89-C128. Residues N67, N119, and N124 are each glycosylated (N-linked (GlcNAc...) asparagine). A helical membrane pass occupies residues 141–165 (NLFYLTIIGHVLSIASLLISLGIFF). Topologically, residues 166–176 (YFKSLSCQRIT) are cytoplasmic. The chain crosses the membrane as a helical span at residues 177–199 (LHKNLFFSFVCNSVITIIHLTAV). The Extracellular portion of the chain corresponds to 200–210 (ANNQALVATNP). A helical membrane pass occupies residues 211–239 (VSCKVSQFIHLYLMGCNYFWMLCEGIYLH). At 240–253 (TLVVVAVFAEKQHL) the chain is on the cytoplasmic side. The helical transmembrane segment at 254-274 (MWYYFLGWGFPLIPACIHAVA) threads the bilayer. The Extracellular segment spans residues 275-290 (RRLYYNDNCWISSDTQ). Residues 289 to 290 (TQ) are required for RAMP3 interaction. A helical transmembrane segment spans residues 291-315 (LLYIIHGPICAALLVNLFFLLNIVR). Topologically, residues 316-330 (VLITKLKVTHQAESN) are cytoplasmic. A helical transmembrane segment spans residues 331-352 (LYMKAVRATLILVPLLGIEFVL). Over 353 to 367 (IPWRPEGKIAEEIYD) the chain is Extracellular. The helical transmembrane segment at 368 to 388 (YIINILMHYQGLLVSTIFCFF) threads the bilayer. The Cytoplasmic segment spans residues 389 to 462 (NGEVQAILRR…VVIKPEKLYD (74 aa)). 2 positions are modified to phosphoserine: S421 and S446.

Belongs to the G-protein coupled receptor 2 family. As to quaternary structure, heterodimer of CALCRL and RAMP1; the receptor complex functions as CGRP receptor. Heterodimer of CALCRL and RAMP2 or CALCRL and RAMP3; the complexes function as adrenomedullin receptor.

The protein resides in the cell membrane. In terms of biological role, g protein-coupled receptor which specificity is determined by its interaction with receptor-activity-modifying proteins (RAMPs). Together with RAMP1, form the receptor complex for calcitonin-gene-related peptides CALCA/CGRP1 and CALCB/CGRP2. Together with RAMP2 or RAMP3, function as receptor complexes for adrenomedullin (ADM and ADM2). Ligand binding causes a conformation change that triggers signaling via guanine nucleotide-binding proteins (G proteins) and modulates the activity of downstream effectors. Activates cAMP-dependent pathway. This is Calcitonin gene-related peptide type 1 receptor (CALCRL) from Bos taurus (Bovine).